The primary structure comprises 150 residues: 3-hydroxyacyl-[acyl-carrier-protein] dehydratase FabZ (150 aa).

Histidine 54 is an active-site residue.

Belongs to the thioester dehydratase family. FabZ subfamily.

The protein resides in the cytoplasm. It catalyses the reaction a (3R)-hydroxyacyl-[ACP] = a (2E)-enoyl-[ACP] + H2O. Involved in unsaturated fatty acids biosynthesis. Catalyzes the dehydration of short chain beta-hydroxyacyl-ACPs and long chain saturated and unsaturated beta-hydroxyacyl-ACPs. In Vibrio parahaemolyticus serotype O3:K6 (strain RIMD 2210633), this protein is 3-hydroxyacyl-[acyl-carrier-protein] dehydratase FabZ.